Reading from the N-terminus, the 334-residue chain is HTH-type transcriptional repressor PurR (334 aa).

In terms of domain architecture, HTH lacI-type spans 2–56; it reads ATIKDVAKMAGVSTTTVSHVINKTRFVAAETEKLVLQAIQELNYSPSAVARSLKV. Residues 4-23 constitute a DNA-binding region (H-T-H motif); the sequence is IKDVAKMAGVSTTTVSHVIN. A DNA-binding region spans residues 48–56; it reads SAVARSLKV. The hypoxanthine site is built by Tyr-73, Lys-189, Thr-191, Phe-220, and Asp-274.

In terms of assembly, homodimer.

Its pathway is purine metabolism; purine nucleotide biosynthesis [regulation]. In terms of biological role, is the main repressor of the genes involved in the de novo synthesis of purine nucleotides, regulating purB, purC, purEK, purF, purHD, purL, purMN and guaBA expression. PurR is allosterically activated to bind its cognate DNA by binding the purine corepressors, hypoxanthine or guanine, thereby effecting transcription repression. This is HTH-type transcriptional repressor PurR from Pasteurella multocida (strain Pm70).